Consider the following 205-residue polypeptide: MSGQGTGFSLGEGVEVRPDKIRLFGKWSWVGVEVRDPSLKRYINLKPVWLPHTGGRHEKRRFGKAEVPIVERLMNKLMRPGRNGGKKHLAYNIVKTAFDIIYFETGENPIQVLVKAIENSAPREDTTKITYGGITYRVSVDVAPQRRVDQALKFIADGARQCAFNNPKPIEECLAEELILAARGDPRSYAIRQKEEIERIALSSR.

The protein belongs to the universal ribosomal protein uS7 family. As to quaternary structure, part of the 30S ribosomal subunit.

Functionally, one of the primary rRNA binding proteins, it binds directly to 16S rRNA where it nucleates assembly of the head domain of the 30S subunit. Is located at the subunit interface close to the decoding center. The sequence is that of Small ribosomal subunit protein uS7 from Aeropyrum pernix (strain ATCC 700893 / DSM 11879 / JCM 9820 / NBRC 100138 / K1).